The chain runs to 230 residues: ATP synthase subunit a (230 aa).

5 consecutive transmembrane segments (helical) span residues Leu-17–Ala-37, Ile-78–Ile-98, Asp-107–Ile-127, Leu-165–Val-187, and Glu-198–Ile-218.

It belongs to the ATPase A chain family. In terms of assembly, F-type ATPases have 2 components, CF(1) - the catalytic core - and CF(0) - the membrane proton channel. CF(1) has five subunits: alpha(3), beta(3), gamma(1), delta(1), epsilon(1). CF(0) has three main subunits: a(1), b(2) and c(9-12). The alpha and beta chains form an alternating ring which encloses part of the gamma chain. CF(1) is attached to CF(0) by a central stalk formed by the gamma and epsilon chains, while a peripheral stalk is formed by the delta and b chains.

Its subcellular location is the cell inner membrane. Functionally, key component of the proton channel; it plays a direct role in the translocation of protons across the membrane. This chain is ATP synthase subunit a, found in Legionella pneumophila subsp. pneumophila (strain Philadelphia 1 / ATCC 33152 / DSM 7513).